The sequence spans 466 residues: Asparagine--tRNA ligase (466 aa).

The protein belongs to the class-II aminoacyl-tRNA synthetase family. As to quaternary structure, homodimer.

Its subcellular location is the cytoplasm. The enzyme catalyses tRNA(Asn) + L-asparagine + ATP = L-asparaginyl-tRNA(Asn) + AMP + diphosphate + H(+). This is Asparagine--tRNA ligase from Klebsiella pneumoniae subsp. pneumoniae (strain ATCC 700721 / MGH 78578).